A 79-amino-acid polypeptide reads, in one-letter code: Conotoxin VnMKLT1-01122 (79 aa).

Positions 1–22 (MKLTCMKIVAVLFLTAWTFVTA) are cleaved as a signal peptide. Positions 23-48 (DDSRNGLEYLFPKAHYEMNPEASKLN) are excised as a propeptide. Residue glutamine 51 is modified to Pyrrolidone carboxylic acid. Intrachain disulfides connect cysteine 53-cysteine 70, cysteine 60-cysteine 74, and cysteine 69-cysteine 78.

It belongs to the conotoxin O1 superfamily. In terms of tissue distribution, expressed by the venom duct.

The protein resides in the secreted. The sequence is that of Conotoxin VnMKLT1-01122 from Conus ventricosus (Mediterranean cone).